The chain runs to 290 residues: Short chain dehydrogenase andI (290 aa).

Residues isoleucine 35, asparagine 120, arginine 154, tyrosine 186, lysine 190, valine 219, and threonine 221 each coordinate NADP(+). Tyrosine 186 acts as the Proton acceptor in catalysis. The Lowers pKa of active site Tyr role is filled by lysine 190.

Belongs to the short-chain dehydrogenases/reductases (SDR) family.

It participates in secondary metabolite biosynthesis; terpenoid biosynthesis. Its function is as follows. Short chain dehydrogenase; part of the gene cluster that mediates the biosynthesis of anditomin, a fungal meroterpenoid. The first step of the pathway is the synthesis of 3,5-dimethylorsellinic acid (DMOA) by the polyketide synthase andM. DMOA is then converted to the phthalide compound 5,7-dihydroxy-4,6-dimethylphthalide (DHDMP) by the cytochrome P450 monooxygenase andK, which is further prenylated by the prenyltransferase andD to yield farnesyl-DHDMP. Further epoxidation by the FAD-dependent monooxygenase andE leads to epoxyfarnesyl-DHDMP. The next step involves the terpene cyclase andB that converts epoxyfarnesyl-DHDMP into preandiloid A through opening of the epoxide ring followed by the cyclization of the farnesyl moiety. Preandiloid A is in turn oxidized at the C-3 hydroxyl group to yield preandiloid B by the dehydrogenase andC. The dioxygenase andA is solely responsible for the dehydrogenation of preandiloid B leading to the enone preandiloid C, as well as for the intriguing structural rearrangement to generate the bicyclo[2.2.2]octane core, transforming preandiloid C into andiconin. FAD-binding monooxygenase andJ then produces andilesin D which is reduced by dehydrogenase andI to yield andilesin A. Action of acetyltransferase andG followed by a spontaneous acetate elimination leads then to andilesin B, which is in turn substrate of the short chain dehydrogenase andH to yield andilesin C. Finally, the dioxygenase andF catalyzes the transformation of andilesin C to anditomin. In Emericella variicolor (Aspergillus stellatus), this protein is Short chain dehydrogenase andI.